An 88-amino-acid chain; its full sequence is UPF0250 protein Sama_2593 (88 aa).

This sequence belongs to the UPF0250 family.

In Shewanella amazonensis (strain ATCC BAA-1098 / SB2B), this protein is UPF0250 protein Sama_2593.